The sequence spans 156 residues: UPF0336 protein SACE_6876 (156 aa).

In terms of domain architecture, MaoC-like spans 8 to 128 (IGREYPPTPA…DFLTVRAEIT (121 aa)).

This sequence belongs to the UPF0336 family.

This chain is UPF0336 protein SACE_6876, found in Saccharopolyspora erythraea (strain ATCC 11635 / DSM 40517 / JCM 4748 / NBRC 13426 / NCIMB 8594 / NRRL 2338).